The sequence spans 334 residues: Phosphate acyltransferase (334 aa).

It belongs to the PlsX family. As to quaternary structure, homodimer. Probably interacts with PlsY.

The protein localises to the cytoplasm. It catalyses the reaction a fatty acyl-[ACP] + phosphate = an acyl phosphate + holo-[ACP]. It participates in lipid metabolism; phospholipid metabolism. In terms of biological role, catalyzes the reversible formation of acyl-phosphate (acyl-PO(4)) from acyl-[acyl-carrier-protein] (acyl-ACP). This enzyme utilizes acyl-ACP as fatty acyl donor, but not acyl-CoA. This chain is Phosphate acyltransferase, found in Caldicellulosiruptor saccharolyticus (strain ATCC 43494 / DSM 8903 / Tp8T 6331).